We begin with the raw amino-acid sequence, 60 residues long: Waprin-Lio1 (60 aa).

The signal sequence occupies residues 1-8; the sequence is MLLGTTSA. Positions 9-59 constitute a WAP domain; the sequence is QVVRPGSCPNVDVPIPPLGLCRTTCQTDANCQEGRKCCKNGCGFMTCETAR. 4 cysteine pairs are disulfide-bonded: Cys16–Cys46, Cys29–Cys50, Cys33–Cys45, and Cys39–Cys55.

It belongs to the venom waprin family. Expressed by the venom gland.

It is found in the secreted. In terms of biological role, damages membranes of susceptible bacteria. Has no hemolytic activity. Not toxic to mice. Does not inhibit the proteinases elastase and cathepsin G. The protein is Waprin-Lio1 of Erythrolamprus poecilogyrus (Water snake).